The following is a 247-amino-acid chain: Putative trypsin-6 (247 aa).

A signal peptide spans 1–15 (MNPLLILAFVGAAVA). Residues 24 to 244 (IVGGYTCEEN…YVDWIKDTIA (221 aa)) form the Peptidase S1 domain. C48 and C64 are disulfide-bonded. H63 functions as the Charge relay system in the catalytic mechanism. Ca(2+)-binding residues include E75, N77, V80, and E85. D107 functions as the Charge relay system in the catalytic mechanism. 3 cysteine pairs are disulfide-bonded: C139/C206, C171/C185, and C196/C220. The active-site Charge relay system is the S200.

It belongs to the peptidase S1 family. Tryptase subfamily. Overexpressed in metastasing in non small cell lung tumors, leading to an enhanced cell migration.

The protein resides in the secreted. It carries out the reaction Preferential cleavage: Arg-|-Xaa, Lys-|-Xaa.. Its function is as follows. May regulate cell migration. The sequence is that of Putative trypsin-6 (PRSS3P2) from Homo sapiens (Human).